The sequence spans 231 residues: Response regulator Rre1 (231 aa).

One can recognise a Response regulatory domain in the interval 6–123; that stretch reads SLLLVDDEPG…ELEAIVRNLL (118 aa). D56 carries the 4-aspartylphosphate modification. Residues 163-228 enclose the HTH luxR-type domain; it reads PSPIKLDFTP…ELVRFALQHG (66 aa). The segment at residues 187-206 is a DNA-binding region (H-T-H motif); that stretch reads NKEIAAQLKTSVRNVEKYVS.

In terms of assembly, interacts with histidine kinase Hik2; may accept phosphate from Hik2.

Functionally, member of at least 2 two-component regulatory systems Hik2/Rre1 and Hik34/Rre1. Responds to hyperosmotic stress, regulates expression of at least 24 genes including dnaK2 and hspA with Hik34 and sigB (sll0306), sll0528, slr1119, slr0852 and ssr3188 with Hik2. Responds to salt stress, regulates expression of at least 24 genes including adhA, dnaK2 and hspA with Hik34. Binds the adhA promoter. Phosphorylated by Hik2 in vitro. Phosphorylated protein has 10-fold higher affinity for DNA than unphosphorylated protein. The sequence is that of Response regulator Rre1 from Synechocystis sp. (strain ATCC 27184 / PCC 6803 / Kazusa).